A 98-amino-acid chain; its full sequence is Integration host factor subunit alpha (98 aa).

Positions 49-71 (FGNFDLRDKNQRPGRNPKTGEDI) are disordered.

This sequence belongs to the bacterial histone-like protein family. As to quaternary structure, heterodimer of an alpha and a beta chain.

This protein is one of the two subunits of integration host factor, a specific DNA-binding protein that functions in genetic recombination as well as in transcriptional and translational control. The sequence is that of Integration host factor subunit alpha from Pectobacterium atrosepticum (strain SCRI 1043 / ATCC BAA-672) (Erwinia carotovora subsp. atroseptica).